A 326-amino-acid polypeptide reads, in one-letter code: GTP 3',8-cyclase (326 aa).

Residues 5 to 227 enclose the Radical SAM core domain; the sequence is GHGRTVDYLR…ALGREGASPS (223 aa). Arg14 lines the GTP pocket. Residues Cys21 and Cys25 each coordinate [4Fe-4S] cluster. An S-adenosyl-L-methionine-binding site is contributed by Tyr27. Position 28 (Cys28) interacts with [4Fe-4S] cluster. Residue Arg64 participates in GTP binding. Residue Gly68 coordinates S-adenosyl-L-methionine. Thr95 serves as a coordination point for GTP. Ser119 contacts S-adenosyl-L-methionine. GTP is bound at residue Lys155. Met189 lines the S-adenosyl-L-methionine pocket. Residues Cys250 and Cys253 each coordinate [4Fe-4S] cluster. 255-257 provides a ligand contact to GTP; it reads RIR. A [4Fe-4S] cluster-binding site is contributed by Cys267.

This sequence belongs to the radical SAM superfamily. MoaA family. Monomer and homodimer. [4Fe-4S] cluster serves as cofactor.

It carries out the reaction GTP + AH2 + S-adenosyl-L-methionine = (8S)-3',8-cyclo-7,8-dihydroguanosine 5'-triphosphate + 5'-deoxyadenosine + L-methionine + A + H(+). Its pathway is cofactor biosynthesis; molybdopterin biosynthesis. Its function is as follows. Catalyzes the cyclization of GTP to (8S)-3',8-cyclo-7,8-dihydroguanosine 5'-triphosphate. The chain is GTP 3',8-cyclase from Sulfurovum sp. (strain NBC37-1).